Consider the following 1116-residue polypeptide: Error-prone DNA polymerase 1 (1116 aa).

The protein belongs to the DNA polymerase type-C family. DnaE2 subfamily.

It localises to the cytoplasm. The enzyme catalyses DNA(n) + a 2'-deoxyribonucleoside 5'-triphosphate = DNA(n+1) + diphosphate. DNA polymerase involved in damage-induced mutagenesis and translesion synthesis (TLS). It is not the major replicative DNA polymerase. This chain is Error-prone DNA polymerase 1, found in Rhizobium meliloti (strain 1021) (Ensifer meliloti).